The following is a 127-amino-acid chain: Glycine cleavage system H protein (127 aa).

The region spanning 22-104 (EAVIGITHFA…YTEGWMLRVK (83 aa)) is the Lipoyl-binding domain. Lys63 carries the N6-lipoyllysine modification.

The protein belongs to the GcvH family. In terms of assembly, the glycine cleavage system is composed of four proteins: P, T, L and H. Requires (R)-lipoate as cofactor.

The glycine cleavage system catalyzes the degradation of glycine. The H protein shuttles the methylamine group of glycine from the P protein to the T protein. The polypeptide is Glycine cleavage system H protein (Nitratidesulfovibrio vulgaris (strain DP4) (Desulfovibrio vulgaris)).